The following is a 200-amino-acid chain: 5'(3')-deoxyribonucleotidase, cytosolic type (200 aa).

The Nucleophile role is filled by Asp12. Mg(2+)-binding residues include Asp12 and Asp14. Asp14 (proton donor) is an active-site residue. Substrate-binding residues include Phe20, Phe46, Tyr67, and Thr101. Thr102 is subject to Phosphothreonine. Residue Lys136 coordinates substrate. Residue Asp147 participates in Mg(2+) binding. At Ser184 the chain carries Phosphoserine.

This sequence belongs to the 5'(3')-deoxyribonucleotidase family. In terms of assembly, homodimer. The cofactor is Mg(2+).

The protein localises to the cytoplasm. Functionally, dephosphorylates the 5' and 2'(3')-phosphates of deoxyribonucleotides, with a preference for dUMP and dTMP, intermediate activity towards dGMP, and low activity towards dCMP and dAMP. The chain is 5'(3')-deoxyribonucleotidase, cytosolic type (Nt5c) from Mus musculus (Mouse).